Reading from the N-terminus, the 632-residue chain is 1-deoxy-D-xylulose-5-phosphate synthase (632 aa).

Residues H77 and 118-120 (GHS) each bind thiamine diphosphate. D149 lines the Mg(2+) pocket. Thiamine diphosphate-binding positions include 150-151 (GA), N178, Y289, and E372. Mg(2+) is bound at residue N178.

It belongs to the transketolase family. DXPS subfamily. As to quaternary structure, homodimer. It depends on Mg(2+) as a cofactor. Requires thiamine diphosphate as cofactor.

The enzyme catalyses D-glyceraldehyde 3-phosphate + pyruvate + H(+) = 1-deoxy-D-xylulose 5-phosphate + CO2. It participates in metabolic intermediate biosynthesis; 1-deoxy-D-xylulose 5-phosphate biosynthesis; 1-deoxy-D-xylulose 5-phosphate from D-glyceraldehyde 3-phosphate and pyruvate: step 1/1. In terms of biological role, catalyzes the acyloin condensation reaction between C atoms 2 and 3 of pyruvate and glyceraldehyde 3-phosphate to yield 1-deoxy-D-xylulose-5-phosphate (DXP). This is 1-deoxy-D-xylulose-5-phosphate synthase from Listeria innocua serovar 6a (strain ATCC BAA-680 / CLIP 11262).